A 480-amino-acid polypeptide reads, in one-letter code: Immune evasion protein OPG047 (480 aa).

The region spanning 10–90 is the BTB domain; it reads CKNILALSMT…SYTGKVYIDS (81 aa). The BACK domain maps to 125–223; that stretch reads CVECYMMGIE…NYLSPRGINN (99 aa). Kelch repeat units follow at residues 273–319, 320–363, 365–408, 410–447, and 448–480; these read VVYL…PANN, KLYV…SINN, IYVM…VFGR, LFLV…IVDN, and KLLL…WDGK.

It belongs to the orthopoxvirus OPG047 family.

Its function is as follows. Might have a role in the suppression of host immune response. This Vaccinia virus (strain Western Reserve) (VACV) protein is Immune evasion protein OPG047 (OPG047).